Consider the following 249-residue polypeptide: 4-hydroxy-tetrahydrodipicolinate reductase (249 aa).

NAD(+) is bound by residues D32, 74–76 (GTT), and 99–102 (SANY). Residue H134 is the Proton donor/acceptor of the active site. Residue H135 coordinates (S)-2,3,4,5-tetrahydrodipicolinate. K138 (proton donor) is an active-site residue. Residue 144–145 (GT) participates in (S)-2,3,4,5-tetrahydrodipicolinate binding.

Belongs to the DapB family.

The protein localises to the cytoplasm. It carries out the reaction (S)-2,3,4,5-tetrahydrodipicolinate + NAD(+) + H2O = (2S,4S)-4-hydroxy-2,3,4,5-tetrahydrodipicolinate + NADH + H(+). The catalysed reaction is (S)-2,3,4,5-tetrahydrodipicolinate + NADP(+) + H2O = (2S,4S)-4-hydroxy-2,3,4,5-tetrahydrodipicolinate + NADPH + H(+). It participates in amino-acid biosynthesis; L-lysine biosynthesis via DAP pathway; (S)-tetrahydrodipicolinate from L-aspartate: step 4/4. Functionally, catalyzes the conversion of 4-hydroxy-tetrahydrodipicolinate (HTPA) to tetrahydrodipicolinate. This Chlorobaculum tepidum (strain ATCC 49652 / DSM 12025 / NBRC 103806 / TLS) (Chlorobium tepidum) protein is 4-hydroxy-tetrahydrodipicolinate reductase.